The sequence spans 5255 residues: Bacitracin synthase 1 (5255 aa).

A domain 1 (isoleucine-activating) region spans residues 39 to 612; it reads LHELFEEQAM…IKELSAFIEA (574 aa). The span at 519–531 shows a compositional bias: basic and acidic residues; that stretch reads VDRKALPEPDRTA. The tract at residues 519 to 542 is disordered; sequence VDRKALPEPDRTAGAENEYEAPRN. Residues 539 to 614 form the Carrier 1 domain; that stretch reads APRNETEEKL…ELSAFIEANH (76 aa). Serine 574 is modified (O-(pantetheine 4'-phosphoryl)serine). The tract at residues 621 to 1037 is cyclization; that stretch reads TLVTRAADPE…ITWDYVEQIF (417 aa). Positions 1109–1648 are domain 2 (cysteine-activating); that stretch reads HHDEVMTYQE…FKNDTIIALD (540 aa). Carrier domains are found at residues 1580–1655, 2616–2691, 3659–3733, and 5166–5241; these read LPEN…KNRE, APRD…VRRR, PPRN…TEET, and APRN…LTAE. An O-(pantetheine 4'-phosphoryl)serine mark is found at serine 1615, serine 2651, serine 3694, and serine 5201. The segment at 2124 to 2689 is domain 3 (leucine-activating); the sequence is GKAIHQLFEE…IKGLRDISVR (566 aa). Residues 3164–3732 form a domain 4 (glutamine-activating) region; the sequence is DHPAVAFGDE…KDLSRFITEE (569 aa). The interval 4668–5249 is domain 5 (isoleucine-activating); that stretch reads LHELFEEQAM…AEAESAVSEE (582 aa).

The protein belongs to the ATP-dependent AMP-binding enzyme family. In terms of assembly, large multienzyme complex of BA1, BA2 and BA3. Requires pantetheine 4'-phosphate as cofactor.

The enzyme catalyses L-glutamate = D-glutamate. It functions in the pathway antibiotic biosynthesis; bacitracin biosynthesis. In terms of biological role, activates five amino acids, incorporates two D-amino acids, releases and cyclizes the mature bacitracin. This Bacillus licheniformis protein is Bacitracin synthase 1 (bacA).